The sequence spans 264 residues: Homeobox protein vent1 (264 aa).

2 stretches are compositionally biased toward basic and acidic residues: residues 16-26 and 44-59; these read KEEATDGKDSM and YAKE…DVQE. The disordered stretch occupies residues 16–140; the sequence is KEEATDGKDS…RLRTAFTPQQ (125 aa). Residues 60–80 are compositionally biased toward polar residues; sequence HTTSFQCSLGEQVINRPSANP. The segment covering 117-130 has biased composition (basic and acidic residues); that stretch reads TEQREKSPKSDLQR. Positions 129-188 form a DNA-binding region, homeobox; the sequence is QRRLRTAFTPQQISKLEQAFNKQRYLGAPERKKLATSLQLSEIQVKTWFQNRRMKLKRQI.

Expressed in the ventral marginal zone of gastrulae. At stage 11.5, also expressed in the ventral region of the animal cap (ectoderm). At the end of gastrulation, predominantly localized to the ventral and lateral regions of the closing slit blastopore. At early tail bud stage, expression is maintained only in the forming proctodeum.

It is found in the nucleus. Functionally, transcriptional repressor. Cooperates with vent2 in a ventral signaling pathway downstream of bmp4, which antagonizes the Spemann organizer and dorsal mesoderm formation, and leads to ventral mesoderm formation. Acts downstream of bmp4 to repress transcription of foxa4-B/XFD-1'. Binds to DNA with preference for the target sequence 5'-CTATT[T/C]G-3'. Also binds 5'-TGCATTTTG-3' at a lower frequency, and occasionally 5'-TTGATC-3'. Binds to the homeobox 2 (HBX2) repressor element in the promoter of the myf5 gene and represses myf5 transcription in the ventral domain. This is Homeobox protein vent1 (vent1) from Xenopus laevis (African clawed frog).